The following is a 397-amino-acid chain: Elongation factor Tu (397 aa).

Positions 10 to 206 (KPHVNIGTIG…EVDAYIPTPE (197 aa)) constitute a tr-type G domain. The G1 stretch occupies residues 19 to 26 (GHVDHGKT). 19 to 26 (GHVDHGKT) contributes to the GTP binding site. Threonine 26 is a binding site for Mg(2+). The segment at 60 to 64 (GITIN) is G2. Residues 81 to 84 (DCPG) are G3. GTP contacts are provided by residues 81-85 (DCPGH) and 136-139 (NKAD). Positions 136 to 139 (NKAD) are G4. A G5 region spans residues 174-176 (SAL).

It belongs to the TRAFAC class translation factor GTPase superfamily. Classic translation factor GTPase family. EF-Tu/EF-1A subfamily. As to quaternary structure, monomer.

The protein resides in the cytoplasm. It carries out the reaction GTP + H2O = GDP + phosphate + H(+). In terms of biological role, GTP hydrolase that promotes the GTP-dependent binding of aminoacyl-tRNA to the A-site of ribosomes during protein biosynthesis. This is Elongation factor Tu from Clostridium acetobutylicum (strain ATCC 824 / DSM 792 / JCM 1419 / IAM 19013 / LMG 5710 / NBRC 13948 / NRRL B-527 / VKM B-1787 / 2291 / W).